Here is a 635-residue protein sequence, read N- to C-terminus: Biosynthetic arginine decarboxylase (635 aa).

At Lys100 the chain carries N6-(pyridoxal phosphate)lysine. 282–292 is a substrate binding site; it reads IDIGGGLGVDY.

Belongs to the Orn/Lys/Arg decarboxylase class-II family. SpeA subfamily. Mg(2+) serves as cofactor. Pyridoxal 5'-phosphate is required as a cofactor.

It carries out the reaction L-arginine + H(+) = agmatine + CO2. The protein operates within amine and polyamine biosynthesis; agmatine biosynthesis; agmatine from L-arginine: step 1/1. Functionally, catalyzes the biosynthesis of agmatine from arginine. This chain is Biosynthetic arginine decarboxylase, found in Pelobacter propionicus (strain DSM 2379 / NBRC 103807 / OttBd1).